Reading from the N-terminus, the 69-residue chain is Light-harvesting polypeptide B-800/860 alpha chain (69 aa).

Topologically, residues 1–14 are cytoplasmic; the sequence is MTNGKIWLVVKPTV. The helical transmembrane segment at 15–35 threads the bilayer; that stretch reads GLPIGMLFAALLAVLIHGLLF. His-31 provides a ligand contact to a bacteriochlorophyll. At 36 to 69 the chain is on the periplasmic side; sequence VDGRLKSWWSEFPVAKPAVVSVQAAPAPVAAEVK.

It belongs to the antenna complex alpha subunit family. As to quaternary structure, the core complex is formed by different alpha and beta chains, binding bacteriochlorophyll molecules, and arranged most probably in tetrameric structures disposed around the reaction center. The non-pigmented gamma chains may constitute additional components.

It localises to the cell inner membrane. Its function is as follows. Antenna complexes are light-harvesting systems, which transfer the excitation energy to the reaction centers. The sequence is that of Light-harvesting polypeptide B-800/860 alpha chain from Rhodocyclus tenuis (Rhodospirillum tenue).